A 463-amino-acid chain; its full sequence is Nitrogenase iron-molybdenum cofactor biosynthesis protein NifE (463 aa).

Belongs to the NifD/NifK/NifE/NifN family.

It participates in cofactor biosynthesis; Fe-Mo cofactor biosynthesis. Functionally, this protein may play a role in the biosynthesis of the prosthetic group of nitrogenase (FeMo cofactor). The chain is Nitrogenase iron-molybdenum cofactor biosynthesis protein NifE (nifE2) from Methanosarcina barkeri.